We begin with the raw amino-acid sequence, 260 residues long: NifU-like protein C1709.19c (260 aa).

Residues Ile161–Val231 are nifU.

Belongs to the NifU family.

The sequence is that of NifU-like protein C1709.19c from Schizosaccharomyces pombe (strain 972 / ATCC 24843) (Fission yeast).